A 212-amino-acid chain; its full sequence is dITP/XTP pyrophosphatase (212 aa).

7–12 contacts substrate; sequence SNNAKK. Residues Glu-39 and Asp-68 each contribute to the Mg(2+) site. Asp-68 functions as the Proton acceptor in the catalytic mechanism. Residues Ser-69, 165-168, Lys-188, and 193-194 each bind substrate; these read FGYD and HR.

Belongs to the HAM1 NTPase family. In terms of assembly, homodimer. Mg(2+) is required as a cofactor.

It carries out the reaction XTP + H2O = XMP + diphosphate + H(+). The catalysed reaction is dITP + H2O = dIMP + diphosphate + H(+). The enzyme catalyses ITP + H2O = IMP + diphosphate + H(+). Its function is as follows. Pyrophosphatase that catalyzes the hydrolysis of nucleoside triphosphates to their monophosphate derivatives, with a high preference for the non-canonical purine nucleotides XTP (xanthosine triphosphate), dITP (deoxyinosine triphosphate) and ITP. Seems to function as a house-cleaning enzyme that removes non-canonical purine nucleotides from the nucleotide pool, thus preventing their incorporation into DNA/RNA and avoiding chromosomal lesions. In Leptothrix cholodnii (strain ATCC 51168 / LMG 8142 / SP-6) (Leptothrix discophora (strain SP-6)), this protein is dITP/XTP pyrophosphatase.